Reading from the N-terminus, the 827-residue chain is Glycerol-3-phosphate acyltransferase (827 aa).

Positions 325-330 (CHRSHM) match the HXXXXD motif motif.

Belongs to the GPAT/DAPAT family.

The protein resides in the cell inner membrane. The enzyme catalyses sn-glycerol 3-phosphate + an acyl-CoA = a 1-acyl-sn-glycero-3-phosphate + CoA. It functions in the pathway phospholipid metabolism; CDP-diacylglycerol biosynthesis; CDP-diacylglycerol from sn-glycerol 3-phosphate: step 1/3. This is Glycerol-3-phosphate acyltransferase from Escherichia coli (strain SMS-3-5 / SECEC).